A 105-amino-acid chain; its full sequence is Histone H2A-like 1 (105 aa).

It belongs to the histone H2A family. In terms of assembly, the nucleosome is a histone octamer containing two molecules each of H2A, H2B, H3 and H4 assembled in one H3-H4 heterotetramer and two H2A-H2B heterodimers. May be incorporated into a proportion of nucleosomes, replacing one or more H2A molecules. Interacts with H2BC1/TH2B; preferentially dimerizes with H2BC1/TH2B to form nucleosomes. As to expression, testis-specific.

Its subcellular location is the nucleus. It localises to the chromosome. Its function is as follows. Atypical histone H2A which can replace conventional H2A in some nucleosomes and may play a role during spermatogenesis. Nucleosomes wrap and compact DNA into chromatin, limiting DNA accessibility to the cellular machineries which require DNA as a template. Histones thereby play a central role in transcription regulation, DNA repair, DNA replication and chromosomal stability. DNA accessibility is regulated via a complex set of post-translational modifications of histones, also called histone code, and nucleosome remodeling. The protein is Histone H2A-like 1 of Mus musculus (Mouse).